The sequence spans 354 residues: Protein FAM181A (354 aa).

2 stretches are compositionally biased toward basic and acidic residues: residues 1–14 (MPLEERRSSGERND) and 129–142 (YLKRGSEDRPRRLL). Disordered stretches follow at residues 1–35 (MPLEERRSSGERNDAAPTNHRRPGEKRASTAKQVS), 117–160 (LPRG…CKEK), and 172–193 (AKEQLPQRQHPEAAQPGQVPMR).

This sequence belongs to the FAM181 family.

This is Protein FAM181A (FAM181A) from Homo sapiens (Human).